Here is a 31-residue protein sequence, read N- to C-terminus: Cytochrome b6-f complex subunit 6 (31 aa).

A helical membrane pass occupies residues 3-23 (VAIDYFLLVGFCFAVTSGLWI).

Belongs to the PetL family. The 4 large subunits of the cytochrome b6-f complex are cytochrome b6, subunit IV (17 kDa polypeptide, PetD), cytochrome f and the Rieske protein, while the 4 small subunits are PetG, PetL, PetM and PetN. The complex functions as a dimer.

It localises to the plastid. The protein localises to the chloroplast thylakoid membrane. Its function is as follows. Component of the cytochrome b6-f complex, which mediates electron transfer between photosystem II (PSII) and photosystem I (PSI), cyclic electron flow around PSI, and state transitions. PetL is important for photoautotrophic growth as well as for electron transfer efficiency and stability of the cytochrome b6-f complex. The polypeptide is Cytochrome b6-f complex subunit 6 (Phaeodactylum tricornutum (strain CCAP 1055/1)).